The sequence spans 254 residues: Leucyl/phenylalanyl-tRNA--protein transferase (254 aa).

Belongs to the L/F-transferase family.

The protein resides in the cytoplasm. It carries out the reaction N-terminal L-lysyl-[protein] + L-leucyl-tRNA(Leu) = N-terminal L-leucyl-L-lysyl-[protein] + tRNA(Leu) + H(+). It catalyses the reaction N-terminal L-arginyl-[protein] + L-leucyl-tRNA(Leu) = N-terminal L-leucyl-L-arginyl-[protein] + tRNA(Leu) + H(+). The enzyme catalyses L-phenylalanyl-tRNA(Phe) + an N-terminal L-alpha-aminoacyl-[protein] = an N-terminal L-phenylalanyl-L-alpha-aminoacyl-[protein] + tRNA(Phe). Functionally, functions in the N-end rule pathway of protein degradation where it conjugates Leu, Phe and, less efficiently, Met from aminoacyl-tRNAs to the N-termini of proteins containing an N-terminal arginine or lysine. In Burkholderia orbicola (strain MC0-3), this protein is Leucyl/phenylalanyl-tRNA--protein transferase.